The sequence spans 150 residues: 1,4-dihydroxy-2-naphthoyl-CoA hydrolase (150 aa).

Residue Asp22 is part of the active site.

It belongs to the 4-hydroxybenzoyl-CoA thioesterase family. DHNA-CoA hydrolase subfamily.

It carries out the reaction 1,4-dihydroxy-2-naphthoyl-CoA + H2O = 1,4-dihydroxy-2-naphthoate + CoA + H(+). The protein operates within cofactor biosynthesis; phylloquinone biosynthesis. It participates in quinol/quinone metabolism; 1,4-dihydroxy-2-naphthoate biosynthesis; 1,4-dihydroxy-2-naphthoate from chorismate: step 7/7. Its function is as follows. Catalyzes the hydrolysis of 1,4-dihydroxy-2-naphthoyl-CoA (DHNA-CoA) to 1,4-dihydroxy-2-naphthoate (DHNA), a reaction involved in phylloquinone (vitamin K1) biosynthesis. The protein is 1,4-dihydroxy-2-naphthoyl-CoA hydrolase of Prochlorococcus marinus (strain NATL1A).